The sequence spans 527 residues: Amine oxidase [flavin-containing] A (527 aa).

Met-1 carries the post-translational modification N-acetylmethionine. Residues 1 to 497 are Cytoplasmic-facing; sequence MASQEKASMA…HSFWERNLPS (497 aa). Ser-383 carries the post-translational modification Phosphoserine. Cys-406 carries the S-8alpha-FAD cysteine modification. The helical; Anchor for type IV membrane protein transmembrane segment at 498 to 518 threads the bilayer; sequence VGGLLKIIGFSTSITALWIVV. Residues 519-527 lie on the Mitochondrial intermembrane side of the membrane; the sequence is YKFKLLTRS. The tract at residues 520–522 is interaction with membrane phospholipid headgroups; sequence KFK.

This sequence belongs to the flavin monoamine oxidase family. As to quaternary structure, monomer, homo- or heterodimer (containing two subunits of similar size). Each subunit contains a covalently bound flavin. Enzymatically active as monomer. The cofactor is FAD.

Its subcellular location is the mitochondrion outer membrane. It catalyses the reaction a secondary aliphatic amine + O2 + H2O = a primary amine + an aldehyde + H2O2. The catalysed reaction is a primary methyl amine + O2 + H2O = an aldehyde + H2O2 + NH4(+). The enzyme catalyses (R)-adrenaline + O2 + H2O = (R)-3,4-dihydroxymandelaldehyde + methylamine + H2O2. It carries out the reaction dopamine + O2 + H2O = 3,4-dihydroxyphenylacetaldehyde + H2O2 + NH4(+). It catalyses the reaction tyramine + O2 + H2O = (4-hydroxyphenyl)acetaldehyde + H2O2 + NH4(+). The catalysed reaction is (R)-noradrenaline + O2 + H2O = (R)-3,4-dihydroxymandelaldehyde + H2O2 + NH4(+). The enzyme catalyses serotonin + O2 + H2O = (5-hydroxyindol-3-yl)acetaldehyde + H2O2 + NH4(+). It carries out the reaction kynuramine + O2 + H2O = 3-(2-aminophenyl)-3-oxopropanal + H2O2 + NH4(+). It catalyses the reaction tryptamine + O2 + H2O = indole-3-acetaldehyde + H2O2 + NH4(+). The catalysed reaction is 2-phenylethylamine + O2 + H2O = 2-phenylacetaldehyde + H2O2 + NH4(+). Catalyzes the oxidative deamination of primary and some secondary amine such as neurotransmitters, with concomitant reduction of oxygen to hydrogen peroxide and has important functions in the metabolism of neuroactive and vasoactive amines in the central nervous system and peripheral tissues. Preferentially oxidizes serotonin. Also catalyzes the oxidative deamination of kynuramine to 3-(2-aminophenyl)-3-oxopropanal that can spontaneously condense to 4-hydroxyquinoline. This chain is Amine oxidase [flavin-containing] A, found in Equus caballus (Horse).